The primary structure comprises 346 residues: Putative aminopeptidase YhfE (346 aa).

H68 and D185 together coordinate a divalent metal cation. E219 acts as the Proton acceptor in catalysis. A divalent metal cation is bound by residues E220, D240, and H320.

This sequence belongs to the peptidase M42 family. A divalent metal cation is required as a cofactor.

The protein is Putative aminopeptidase YhfE (yhfE) of Bacillus subtilis (strain 168).